Reading from the N-terminus, the 371-residue chain is Peptidyl-prolyl cis-trans isomerase CPR6 (371 aa).

The PPIase cyclophilin-type domain occupies 7–174; it reads FFDISIGGKP…RDVKIDDCGV (168 aa). TPR repeat units lie at residues 219-252, 270-303, and 308-341; these read IETVKNIGTEQFKKQNYSVALEKYVKCDKFLKEY, VSIPLNIAICALKLKDYKQVLVASSEVLYAEAAD, and AKALYRRGLAYYHVNDTDMALNDLEMATTFQPND.

It belongs to the cyclophilin-type PPIase family. PPIase D subfamily. As to quaternary structure, interacts with RPD3.

The protein localises to the cytoplasm. It carries out the reaction [protein]-peptidylproline (omega=180) = [protein]-peptidylproline (omega=0). In terms of biological role, PPIases accelerate the folding of proteins. It catalyzes the cis-trans isomerization of proline imidic peptide bonds in oligopeptides. This Saccharomyces cerevisiae (strain ATCC 204508 / S288c) (Baker's yeast) protein is Peptidyl-prolyl cis-trans isomerase CPR6 (CPR6).